We begin with the raw amino-acid sequence, 297 residues long: Syntaxin-4 (297 aa).

A compositionally biased stretch (basic and acidic residues) spans 1-12; that stretch reads MRDRTHELRQGD. Residues 1 to 21 are disordered; it reads MRDRTHELRQGDDSSDDEDKE. Residues 1–275 lie on the Cytoplasmic side of the membrane; sequence MRDRTHELRQ…QKKARKKKVF (275 aa). Phosphoserine occurs at positions 14 and 15. Phosphothreonine is present on T31. Phosphoserine occurs at positions 36, 117, 208, and 248. Residues 43 to 163 adopt a coiled-coil conformation; sequence QKVRTIRQTI…ERIRRQLKIT (121 aa). The region spanning 200 to 262 is the t-SNARE coiled-coil homology domain; it reads LNEISARHSE…ERGQEHVKVA (63 aa). The helical; Anchor for type IV membrane protein transmembrane segment at 276 to 296 threads the bilayer; that stretch reads IAICLSITVLILVVIIVISTL. Residue V297 is a topological domain, extracellular.

This sequence belongs to the syntaxin family. As to quaternary structure, component of the SNARE complex composed of STX4, SNAP23 and VAMP7 that interacts with SYT7 during lysosomal exocytosis. Found in a complex with VAMP8 and SNAP23. Detected in a complex with SNAP23 and STXBP4. Interacts with VAMP2. Interacts with SNAP23 and SNAPIN. Interacts with LLGL1. Interacts (via C-terminus) with CENPF. Interacts with DOC2B. Interacts with STXBP6. Interacts with STXBP3; excludes interaction with DOC2B and SNAP25. Interacts with STXBP4; excludes interaction with VAMP2. Interacts with STXBP5L.

The protein resides in the cell membrane. The protein localises to the cell projection. Its subcellular location is the neuron projection. It is found in the stereocilium. Plasma membrane t-SNARE that mediates docking of transport vesicles. Necessary for the translocation of SLC2A4 from intracellular vesicles to the plasma membrane. In neurons, recruited at neurite tips to membrane domains rich in the phospholipid 1-oleoyl-2-palmitoyl-PC (OPPC) which promotes neurite tip surface expression of the dopamine transporter SLC6A3/DAT by facilitating fusion of SLC6A3-containing transport vesicles with the plasma membrane. Together with STXB3 and VAMP2, may also play a role in docking/fusion of intracellular GLUT4-containing vesicles with the cell surface in adipocytes and in docking of synaptic vesicles at presynaptic active zones. Required for normal hearing. In Bos taurus (Bovine), this protein is Syntaxin-4 (STX4).